A 484-amino-acid polypeptide reads, in one-letter code: Poly(A) polymerase alpha-B (484 aa).

A Nuclear localization signal 1 motif is present at residues 240–257; it reads RKQLHQLLPSHVLPKKKK. Disordered regions lie at residues 276 to 314, 326 to 356, and 375 to 484; these read SVDS…PVSL, VPQN…SSTP, and KPVT…RLNR. The Nuclear localization signal 2 motif lies at 392–407; that stretch reads KRTSSPTNEESPKKTK. Residues 423–441 are compositionally biased toward basic and acidic residues; that stretch reads EQNKLEPEELKEVHSEEKS. The segment covering 451 to 464 has biased composition (low complexity); sequence SSQRSSSTDLSDIS.

The protein belongs to the poly(A) polymerase family. As to quaternary structure, monomer.

The protein localises to the nucleus. The enzyme catalyses RNA(n) + ATP = RNA(n)-3'-adenine ribonucleotide + diphosphate. In terms of biological role, polymerase that creates the 3'-poly(A) tail of mRNA's. May acquire specificity through interaction with a cleavage and polyadenylation factor (CPSF). This is Poly(A) polymerase alpha-B (papola-b) from Xenopus laevis (African clawed frog).